The chain runs to 1082 residues: RNA-directed RNA polymerase (1082 aa).

The RdRp catalytic domain occupies 498–670; the sequence is LSYGDVTRYL…ALASLTGCEI (173 aa).

Belongs to the reoviridae RNA-directed RNA polymerase family. In terms of assembly, interacts with VP3 (Potential). Interacts with VP2; this interaction activates VP1. Interacts with NSP5; this interaction is probably necessary for the formation of functional virus factories. Interacts with NSP2; this interaction is weak. It depends on Mg(2+) as a cofactor.

The protein resides in the virion. It carries out the reaction RNA(n) + a ribonucleoside 5'-triphosphate = RNA(n+1) + diphosphate. RNA-directed RNA polymerase that is involved in both transcription and genome replication. Together with VP3 capping enzyme, forms an enzyme complex positioned near the channels situated at each of the five-fold vertices of the core. Following infection, the outermost layer of the virus is lost, leaving a double-layered particle (DLP) made up of the core and VP6 shell. VP1 then catalyzes the transcription of fully conservative plus-strand genomic RNAs that are extruded through the DLP's channels into the cytoplasm where they function as mRNAs for translation of viral proteins. One copy of each of the viral (+)RNAs is also recruited during core assembly, together with newly synthesized polymerase complexes and VP2. The polymerase of these novo-formed particles catalyzes the synthesis of complementary minus-strands leading to dsDNA formation. To do so, the polymerase specifically recognizes conserved 3' sequence(s) in plus-strand RNA templates. Once dsRNA synthesis is complete, the polymerase switches to the transcriptional mode, thus providing secondary transcription. This is RNA-directed RNA polymerase from Rotavirus C (strain RVC/Pig/United States/Cowden/1980) (RV-C).